We begin with the raw amino-acid sequence, 605 residues long: Heparan-sulfate 6-O-sulfotransferase 2 (605 aa).

Residues Met-1 to Pro-4 are Cytoplasmic-facing. The disordered stretch occupies residues Met-1–Pro-66. The helical; Signal-anchor for type II membrane protein transmembrane segment at Ala-5–Cys-27 threads the bilayer. Basic and acidic residues predominate over residues Arg-9–Glu-18. Over Pro-28 to Arg-605 the chain is Lumenal. Asn-209 carries N-linked (GlcNAc...) asparagine glycosylation. A 3'-phosphoadenylyl sulfate-binding site is contributed by His-233–Thr-241. Residues Lys-263 to Lys-264, Arg-280, Trp-285, and His-290 contribute to the substrate site. The Proton acceptor role is filled by His-290. Residues Arg-325 and Ser-333 each coordinate 3'-phosphoadenylyl sulfate. Residues His-337 and Trp-344 each coordinate substrate. The N-linked (GlcNAc...) asparagine glycan is linked to Asn-404. A 3'-phosphoadenylyl sulfate-binding site is contributed by Thr-457–Tyr-459. Asn-460 is a glycosylation site (N-linked (GlcNAc...) asparagine). Residue Arg-463–Ala-464 participates in 3'-phosphoadenylyl sulfate binding. The interval Phe-530–Arg-605 is disordered. Residues Gln-531–Gln-571 show a composition bias toward low complexity. N-linked (GlcNAc...) asparagine glycans are attached at residues Asn-544, Asn-556, Asn-564, Asn-589, and Asn-592. A compositionally biased stretch (polar residues) spans Lys-579–Tyr-597.

It belongs to the sulfotransferase 6 family.

Its subcellular location is the membrane. It carries out the reaction alpha-D-glucosaminyl-[heparan sulfate](n) + 3'-phosphoadenylyl sulfate = 6-sulfo-alpha-D-glucosaminyl-[heparan sulfate](n) + adenosine 3',5'-bisphosphate + H(+). 6-O-sulfation enzyme which catalyzes the transfer of sulfate from 3'-phosphoadenosine 5'-phosphosulfate (PAPS) to position 6 of the N-sulfoglucosamine residue (GlcNS) of heparan sulfate. The protein is Heparan-sulfate 6-O-sulfotransferase 2 of Homo sapiens (Human).